Here is a 675-residue protein sequence, read N- to C-terminus: Neurexin-3b-beta (675 aa).

The N-terminal stretch at 1 to 30 is a signal peptide; sequence MRPHFKTRYPQWLSCMLPLVTGCVFGAVWG. Residues 31 to 599 lie on the Extracellular side of the membrane; it reads SNLDSTVVLS…EVIRESSSTT (569 aa). The 201-residue stretch at 81 to 281 folds into the Laminin G-like domain; it reads ATYIFGKGGG…HANIKINGSV (201 aa). Disordered stretches follow at residues 313-337 and 490-534; these read TTLS…DIVS and FKPK…MNNR. Positions 325-335 are enriched in polar residues; the sequence is SPPTIQTTDDI. The chain crosses the membrane as a helical span at residues 600 to 620; sequence GMVVGIVSAAALCILILLYAM. Residues 621–675 are Cytoplasmic-facing; sequence YKYRNRDEGSYQVDETRNYISNSAQNNGTVVKDKQPSTKGASNKRPKDKDKEYYV. The interval 642 to 675 is disordered; sequence NSAQNNGTVVKDKQPSTKGASNKRPKDKDKEYYV. A compositionally biased stretch (basic and acidic residues) spans 665–675; the sequence is RPKDKDKEYYV.

This sequence belongs to the neurexin family. In terms of processing, processed by alpha-secretase leading to the formation of an extracellular soluble protein as well as a C-terminal membrane-embedded fragment (CTF). Proteolysis of these CTFs by gamma-secretase releases intracellular domains (ICDs) and extracellular peptides.

It localises to the membrane. Functionally, neuronal cell surface protein that may be involved in cell recognition and cell adhesion. The polypeptide is Neurexin-3b-beta (nrxn3b) (Danio rerio (Zebrafish)).